Reading from the N-terminus, the 854-residue chain is Envelope glycoprotein B (854 aa).

The first 22 residues, methionine 1 to cysteine 22, serve as a signal peptide directing secretion. Residues glutamine 23–proline 732 are Virion surface-facing. Asparagine 51 carries an N-linked (GlcNAc...) asparagine; by host glycan. 5 disulfides stabilise this stretch: cysteine 69/cysteine 527, cysteine 86/cysteine 483, cysteine 158/cysteine 223, cysteine 315/cysteine 362, and cysteine 552/cysteine 589. Residues isoleucine 125–alanine 131 are involved in fusion and/or binding to host membrane. Asparagine 180 carries an N-linked (GlcNAc...) asparagine; by host glycan. The interval glycine 209–arginine 217 is involved in fusion and/or binding to host membrane. N-linked (GlcNAc...) asparagine; by host glycosylation is found at asparagine 258 and asparagine 311. Asparagine 364, asparagine 379, asparagine 385, asparagine 424, asparagine 564, and asparagine 630 each carry an N-linked (GlcNAc...) asparagine; by host glycan. The disordered stretch occupies residues glutamine 422–serine 443. The hydrophobic membrane proximal region stretch occupies residues leucine 679 to lysine 730. A helical transmembrane segment spans residues phenylalanine 733–asparagine 753. Over arginine 754 to proline 854 the chain is Intravirion. Basic and acidic residues predominate over residues histidine 802–glutamate 813. The tract at residues histidine 802–alanine 829 is disordered. Positions tyrosine 839 to leucine 842 match the Internalization motif motif.

The protein belongs to the herpesviridae glycoprotein B family. As to quaternary structure, homotrimer; disulfide-linked. Binds to heparan sulfate proteoglycans. Interacts with gH/gL heterodimer. Post-translationally, a proteolytic cleavage by host furin generates two subunits that remain linked by disulfide bonds.

The protein resides in the virion membrane. It is found in the host cell membrane. Its subcellular location is the host endosome membrane. The protein localises to the host Golgi apparatus membrane. Envelope glycoprotein that forms spikes at the surface of virion envelope. Essential for the initial attachment to heparan sulfate moieties of the host cell surface proteoglycans. Involved in fusion of viral and cellular membranes leading to virus entry into the host cell. Following initial binding to its host receptors, membrane fusion is mediated by the fusion machinery composed at least of gB and the heterodimer gH/gL. May be involved in the fusion between the virion envelope and the outer nuclear membrane during virion egress. The chain is Envelope glycoprotein B from Connochaetes taurinus (Blue wildebeest).